The primary structure comprises 251 residues: Pyridoxine 5'-phosphate synthase (251 aa).

Asn-7 provides a ligand contact to 3-amino-2-oxopropyl phosphate. 1-deoxy-D-xylulose 5-phosphate is bound at residue 9–10 (DH). Position 18 (Arg-18) interacts with 3-amino-2-oxopropyl phosphate. His-43 (proton acceptor) is an active-site residue. 1-deoxy-D-xylulose 5-phosphate is bound by residues Arg-45 and His-50. Residue Glu-73 is the Proton acceptor of the active site. Thr-103 contributes to the 1-deoxy-D-xylulose 5-phosphate binding site. The Proton donor role is filled by His-197. 3-amino-2-oxopropyl phosphate contacts are provided by residues Gly-198 and 219 to 220 (GH).

This sequence belongs to the PNP synthase family. Homooctamer; tetramer of dimers.

It localises to the cytoplasm. The enzyme catalyses 3-amino-2-oxopropyl phosphate + 1-deoxy-D-xylulose 5-phosphate = pyridoxine 5'-phosphate + phosphate + 2 H2O + H(+). Its pathway is cofactor biosynthesis; pyridoxine 5'-phosphate biosynthesis; pyridoxine 5'-phosphate from D-erythrose 4-phosphate: step 5/5. Functionally, catalyzes the complicated ring closure reaction between the two acyclic compounds 1-deoxy-D-xylulose-5-phosphate (DXP) and 3-amino-2-oxopropyl phosphate (1-amino-acetone-3-phosphate or AAP) to form pyridoxine 5'-phosphate (PNP) and inorganic phosphate. The sequence is that of Pyridoxine 5'-phosphate synthase from Caulobacter sp. (strain K31).